The following is a 153-amino-acid chain: Pheromone-binding protein Gp-9 (153 aa).

Residues 1 to 19 form the signal peptide; that stretch reads MKTFVLHIFIFALVAFASA. Disulfide bonds link C37-C77, C73-C129, and C118-C138.

Belongs to the PBP/GOBP family. As to quaternary structure, homodimer.

The protein localises to the secreted. In terms of biological role, colony queen number, a major feature of social organization, is associated with worker genotype for Gp-9. Colonies are headed by either a single reproductive queen (monogyne form) or multiple queens (polygyne form). Differences in worker Gp-9 genotypes between social forms may cause differences in workers' abilities to recognize queens and regulate their numbers. The sequence is that of Pheromone-binding protein Gp-9 from Solenopsis tridens (Fire ant).